A 732-amino-acid polypeptide reads, in one-letter code: Wall-associated receptor kinase 2 (732 aa).

An N-terminal signal peptide occupies residues 1 to 23 (MKVQEGLFVVAVFYLAYTQLVKG). The Extracellular portion of the chain corresponds to 24–329 (QPRKECQTRC…RKVRPEYFRW (306 aa)). 6 N-linked (GlcNAc...) asparagine glycosylation sites follow: Asn-57, Asn-75, Asn-111, Asn-154, Asn-217, and Asn-246. Positions 230–277 (GDKTCKQVEYRGVCGGNSTCFDSTGGTGYNCKCLEGFEGNPYLPNGCQ) constitute an EGF-like 1 domain. 6 disulfides stabilise this stretch: Cys-234–Cys-249, Cys-243–Cys-260, Cys-262–Cys-276, Cys-282–Cys-295, Cys-289–Cys-304, and Cys-306–Cys-318. Positions 278–319 (DINECISSRHNCSEHSTCENTKGSFNCNCPSGYRKDSLNSCT) constitute an EGF-like 2; calcium-binding domain. The N-linked (GlcNAc...) asparagine glycan is linked to Asn-288. A helical transmembrane segment spans residues 330 to 350 (TQIFLGTTIGFSVIMLGISCL). The Cytoplasmic segment spans residues 351–732 (QQKIKHRKNT…VTTLDIEAGR (382 aa)). A Phosphothreonine modification is found at Thr-393. Positions 404 to 677 (YHESRILGQG…KEVAAELEAL (274 aa)) constitute a Protein kinase domain. ATP contacts are provided by residues 410–418 (LGQGGQGTV) and Lys-432. Position 477 is a phosphotyrosine (Tyr-477). The active-site Proton acceptor is the Asp-529. Phosphothreonine is present on residues Thr-563 and Thr-568. A Phosphotyrosine modification is found at Tyr-576.

This sequence belongs to the protein kinase superfamily. Ser/Thr protein kinase family. Predominantly expressed in green tissues such as stems and leaves. Detected at organ junctions.

It localises to the membrane. It carries out the reaction L-seryl-[protein] + ATP = O-phospho-L-seryl-[protein] + ADP + H(+). The catalysed reaction is L-threonyl-[protein] + ATP = O-phospho-L-threonyl-[protein] + ADP + H(+). In terms of biological role, serine/threonine-protein kinase that may function as a signaling receptor of extracellular matrix component. Binding to pectin may have significance in the control of cell expansion, morphogenesis and development. This chain is Wall-associated receptor kinase 2 (WAK2), found in Arabidopsis thaliana (Mouse-ear cress).